A 177-amino-acid polypeptide reads, in one-letter code: Outer membrane lipoprotein Blc (177 aa).

An N-terminal signal peptide occupies residues M1–A18. Residue C19 is the site of N-palmitoyl cysteine attachment. C19 carries S-diacylglycerol cysteine lipidation.

Belongs to the calycin superfamily. Lipocalin family. In terms of assembly, homodimer.

The protein localises to the cell outer membrane. Functionally, involved in the storage or transport of lipids necessary for membrane maintenance under stressful conditions. Displays a binding preference for lysophospholipids. The protein is Outer membrane lipoprotein Blc of Citrobacter freundii.